The primary structure comprises 430 residues: Serine--tRNA ligase (430 aa).

Residue 237–239 (TAE) coordinates L-serine. Residue 268–270 (RSE) coordinates ATP. Glu-291 lines the L-serine pocket. Position 355–358 (355–358 (EISS)) interacts with ATP. L-serine is bound at residue Ser-391.

The protein belongs to the class-II aminoacyl-tRNA synthetase family. Type-1 seryl-tRNA synthetase subfamily. Homodimer. The tRNA molecule binds across the dimer.

Its subcellular location is the cytoplasm. The enzyme catalyses tRNA(Ser) + L-serine + ATP = L-seryl-tRNA(Ser) + AMP + diphosphate + H(+). It carries out the reaction tRNA(Sec) + L-serine + ATP = L-seryl-tRNA(Sec) + AMP + diphosphate + H(+). Its pathway is aminoacyl-tRNA biosynthesis; selenocysteinyl-tRNA(Sec) biosynthesis; L-seryl-tRNA(Sec) from L-serine and tRNA(Sec): step 1/1. Its function is as follows. Catalyzes the attachment of serine to tRNA(Ser). Is also able to aminoacylate tRNA(Sec) with serine, to form the misacylated tRNA L-seryl-tRNA(Sec), which will be further converted into selenocysteinyl-tRNA(Sec). The polypeptide is Serine--tRNA ligase (Salmonella heidelberg (strain SL476)).